A 363-amino-acid chain; its full sequence is Small ribosomal subunit biogenesis GTPase RsgA (363 aa).

A CP-type G domain is found at His-112–Leu-268. GTP contacts are provided by residues Thr-157–Asp-160 and Gly-210–Thr-218. Cys-291, Cys-296, His-298, and Cys-304 together coordinate Zn(2+). Residues Arg-340–Arg-363 are disordered.

It belongs to the TRAFAC class YlqF/YawG GTPase family. RsgA subfamily. As to quaternary structure, monomer. Associates with 30S ribosomal subunit, binds 16S rRNA. Zn(2+) serves as cofactor.

The protein localises to the cytoplasm. Functionally, one of several proteins that assist in the late maturation steps of the functional core of the 30S ribosomal subunit. Helps release RbfA from mature subunits. May play a role in the assembly of ribosomal proteins into the subunit. Circularly permuted GTPase that catalyzes slow GTP hydrolysis, GTPase activity is stimulated by the 30S ribosomal subunit. This is Small ribosomal subunit biogenesis GTPase RsgA from Xanthomonas campestris pv. campestris (strain 8004).